We begin with the raw amino-acid sequence, 435 residues long: D-amino acid dehydrogenase (435 aa).

Residue 3–17 (VLILGSGVIGTTSAW) participates in FAD binding.

The protein belongs to the DadA oxidoreductase family. The cofactor is FAD.

The enzyme catalyses a D-alpha-amino acid + A + H2O = a 2-oxocarboxylate + AH2 + NH4(+). It participates in amino-acid degradation; D-alanine degradation; NH(3) and pyruvate from D-alanine: step 1/1. In terms of biological role, oxidative deamination of D-amino acids. This is D-amino acid dehydrogenase from Xylella fastidiosa (strain 9a5c).